The chain runs to 89 residues: GTP cyclohydrolase 1 feedback regulatory protein (89 aa).

The protein belongs to the GFRP family. Homopentamer. Forms a complex with GCH1 where a GCH1 homodecamer is sandwiched by two GFRP homopentamers.

The protein resides in the nucleus. The protein localises to the nucleus membrane. Its subcellular location is the cytoplasm. It is found in the cytosol. In terms of biological role, mediates tetrahydrobiopterin inhibition of GTP cyclohydrolase 1. In Danio rerio (Zebrafish), this protein is GTP cyclohydrolase 1 feedback regulatory protein (gchfr).